The primary structure comprises 161 residues: Nucleotide-binding protein Nmul_A1044 (161 aa).

The protein belongs to the YajQ family.

In terms of biological role, nucleotide-binding protein. The sequence is that of Nucleotide-binding protein Nmul_A1044 from Nitrosospira multiformis (strain ATCC 25196 / NCIMB 11849 / C 71).